Reading from the N-terminus, the 463-residue chain is L-seryl-tRNA(Sec) selenium transferase (463 aa).

Lys-295 bears the N6-(pyridoxal phosphate)lysine mark.

It belongs to the SelA family. In terms of assembly, homodecamer; pentamer of dimers. Binds only one seryl-tRNA(Sec) per dimer. Pyridoxal 5'-phosphate serves as cofactor.

Its subcellular location is the cytoplasm. It carries out the reaction L-seryl-tRNA(Sec) + selenophosphate + H(+) = L-selenocysteinyl-tRNA(Sec) + phosphate. Its pathway is aminoacyl-tRNA biosynthesis; selenocysteinyl-tRNA(Sec) biosynthesis; selenocysteinyl-tRNA(Sec) from L-seryl-tRNA(Sec) (bacterial route): step 1/1. Converts seryl-tRNA(Sec) to selenocysteinyl-tRNA(Sec) required for selenoprotein biosynthesis. This Salmonella dublin (strain CT_02021853) protein is L-seryl-tRNA(Sec) selenium transferase.